Reading from the N-terminus, the 491-residue chain is bZIP transcription factor hapX (491 aa).

The segment at 19-73 (AKPAISPSPGPGTPGSITSKEWVIPPRPKPGRKPATDTPPTKRKAQNRAAQRAFR) is disordered. Positions 55–95 (DTPPTKRKAQNRAAQRAFRERRAARVNELEEQIKKIEDEHE) constitute a bZIP domain. The segment at 60–79 (KRKAQNRAAQRAFRERRAAR) is basic motif. Residues 83–90 (LEEQIKKI) are leucine-zipper. The span at 149 to 161 (SSLSDREAVRSDK) shows a compositional bias: basic and acidic residues. 3 disordered regions span residues 149 to 196 (SSLS…REEV), 224 to 245 (EQSR…KPDP), and 397 to 416 (VSRG…SAAP). Residues 397 to 413 (VSRGRSGSNNNTSSGSS) show a composition bias toward low complexity.

This sequence belongs to the bZIP family. YAP subfamily.

Its subcellular location is the nucleus. Transcription factor required for repression of genes during iron starvation. Represses iron-dependent and mitochondrial-localized activities including respiration, TCA cycle, amino acid metabolism, iron-sulfur-cluster and heme biosynthesis. Iron starvation causes a massive remodeling of the amino acid pool and hapX is essential for the coordination of the production of siderophores and their precursor ornithine. This is bZIP transcription factor hapX from Aspergillus fumigatus (strain ATCC MYA-4609 / CBS 101355 / FGSC A1100 / Af293) (Neosartorya fumigata).